Reading from the N-terminus, the 599-residue chain is Elongation factor 4 (599 aa).

One can recognise a tr-type G domain in the interval Lys2–Gln184. GTP contacts are provided by residues Asp14–Thr19 and Asn131–Asp134.

The protein belongs to the TRAFAC class translation factor GTPase superfamily. Classic translation factor GTPase family. LepA subfamily.

Its subcellular location is the cell inner membrane. The enzyme catalyses GTP + H2O = GDP + phosphate + H(+). Functionally, required for accurate and efficient protein synthesis under certain stress conditions. May act as a fidelity factor of the translation reaction, by catalyzing a one-codon backward translocation of tRNAs on improperly translocated ribosomes. Back-translocation proceeds from a post-translocation (POST) complex to a pre-translocation (PRE) complex, thus giving elongation factor G a second chance to translocate the tRNAs correctly. Binds to ribosomes in a GTP-dependent manner. The polypeptide is Elongation factor 4 (Yersinia enterocolitica serotype O:8 / biotype 1B (strain NCTC 13174 / 8081)).